The primary structure comprises 238 residues: Phosphoglycolate phosphatase (238 aa).

Asp-8 serves as the catalytic Nucleophile. The Mg(2+) site is built by Asp-8 and Asp-10. Lys-163 provides a ligand contact to substrate. Mg(2+)-binding residues include Asp-186 and Asp-190.

It belongs to the archaeal SPP-like hydrolase family. Requires Mg(2+) as cofactor.

It carries out the reaction 2-phosphoglycolate + H2O = glycolate + phosphate. Its function is as follows. Catalyzes the dephosphorylation of 2-phosphoglycolate. In Staphylothermus marinus (strain ATCC 43588 / DSM 3639 / JCM 9404 / F1), this protein is Phosphoglycolate phosphatase.